The following is a 722-amino-acid chain: Dipeptidyl aminopeptidase BII (722 aa).

An N-terminal signal peptide occupies residues 1–24; the sequence is MRPNLLAAAIAVPLSLLAAQIAQA. 2 disulfides stabilise this stretch: C70-C87 and C166-C174. H86 (charge relay system) is an active-site residue. 215–216 contributes to the substrate binding site; sequence NW. Catalysis depends on D224, which acts as the Charge relay system. Substrate-binding positions include N330, 655–657, and 673–674; these read GNS and FD. The active-site Charge relay system is S657.

The protein belongs to the peptidase S46 family. Homodimer.

Its activity is regulated as follows. Completely inhibited by the serine protease inhibitor diisopropyl fluorophosphate (DFP) and potently inhibited by 0.5 mM ZnCl(2), 10 mM o-phenanthlorine, phenylmethanesulfonyl fluoride (PMSF) and N-tosyl-L-phenyl-alanyl chloromethyl ketone (TPCK), but not by N-tosyl-L-lysyl chloromethyl ketone (TLCK). Activity is not affected significantly by protease inhibitors, such as chymostatin, leupeptin, N-ethylmaleimide (NEM), iodoacetate (IAA), L-trans-epoxysuccinyl-leucylamido(4-guanido)butane (E64) and pepstatin A or by CoCl(2), CaCl(2) and EDTA. Its function is as follows. Exopeptidase that catalyzes the removal of dipeptide units (NH2-P2-P1-) from the free amino termini of oligopeptides and small proteins. Peptide digestion is sequential and substrate recognition is non-specific, with the exception that Pro is not suitable as a P1 residue. Removes many residues of bioactive oligopeptides such as angiotensin I and neuromedin N and also cleaves oxidized insulin B chain. Able to hydrolyze an X-Pro bond, an imido bond. No endopeptidase activity. May play a physiological role in feeding. The sequence is that of Dipeptidyl aminopeptidase BII from Pseudoxanthomonas mexicana.